The chain runs to 223 residues: MTQDEMKFAVAQAALKHVVKDTIIGVGTGSTTNFFIDALAKIKNEIKGAIASSKATRQRLESYDIKVFDLNEVETISVYIDGADESDDGLNLIKGGGGALMREKIVAAVANQFICIADESKLVTIMGDFPLPVEVIPMASNYVKYQISQRIGGTPTVRENFITDNGNLILDIKDLKITNPKVMETKLNSITGVVANGLFANRGADILLLGTSNGVKIVTRLIG.

Residues 28-31 (TGST), 81-84 (DGAD), and 94-97 (KGGG) each bind substrate. The active-site Proton acceptor is E103. K121 is a substrate binding site.

Belongs to the ribose 5-phosphate isomerase family. As to quaternary structure, homodimer.

The enzyme catalyses aldehydo-D-ribose 5-phosphate = D-ribulose 5-phosphate. It participates in carbohydrate degradation; pentose phosphate pathway; D-ribose 5-phosphate from D-ribulose 5-phosphate (non-oxidative stage): step 1/1. Functionally, catalyzes the reversible conversion of ribose-5-phosphate to ribulose 5-phosphate. The sequence is that of Ribose-5-phosphate isomerase A from Ruthia magnifica subsp. Calyptogena magnifica.